Consider the following 298-residue polypeptide: ADP/ATP translocase 1 (298 aa).

The Mitochondrial intermembrane portion of the chain corresponds to 1–7 (MSDQALS). The residue at position 2 (serine 2) is an N-acetylserine. Residues 6 to 98 (LSFLKDFLAG…FAFKDKYKQI (93 aa)) form a Solcar 1 repeat. A Phosphoserine modification is found at serine 7. A helical transmembrane segment spans residues 8 to 37 (FLKDFLAGGVAAAISKTAVAPIERVKLLLQ). Over 38–74 (VQHASKQISAEKQYKGIIDCVVRIPKEQGFLSFWRGN) the chain is Mitochondrial matrix. The residue at position 52 (lysine 52) is an N6,N6,N6-trimethyllysine. Position 52 is an N6-methyllysine (lysine 52). A helical transmembrane segment spans residues 75-99 (LANVIRYFPTQALNFAFKDKYKQIF). Residues arginine 80 and lysine 92 each contribute to the ADP site. At 100-109 (LGGVDRHKQF) the chain is on the mitochondrial intermembrane side. Residues 110–130 (WRYFAGNLASGGAAGATSLCF) form a helical membrane-spanning segment. 2 Solcar repeats span residues 111–201 (RYFA…AKGM) and 212–297 (VSWM…IKKF). At 131-178 (VYPLDFARTRLAADVGKGAAQREFTGLGNCITKIFKSDGLRGLYQGFN) the chain is on the mitochondrial matrix side. An N6-succinyllysine modification is found at lysine 147. An S-nitrosocysteine modification is found at cysteine 160. The helical transmembrane segment at 179–199 (VSVQGIIIYRAAYFGVYDTAK) threads the bilayer. Topologically, residues 200-210 (GMLPDPKNVHI) are mitochondrial intermembrane. Residues 211 to 231 (IVSWMIAQTVTAVAGLVSYPF) form a helical membrane-spanning segment. Residues 232-273 (DTVRRRMMMQSGRKGADIMYTGTVDCWRKIAKDEGPKAFFKG) lie on the Mitochondrial matrix side of the membrane. An ADP-binding site is contributed by arginine 235. The tract at residues 235 to 240 (RRRMMM) is important for transport activity. Positions 235 to 240 (RRRMMM) match the Nucleotide carrier signature motif motif. N6-succinyllysine occurs at positions 245 and 272. A helical transmembrane segment spans residues 274-291 (AWSNVLRGMGGAFVLVLY). Residues 292-298 (DEIKKFV) lie on the Mitochondrial intermembrane side of the membrane.

It belongs to the mitochondrial carrier (TC 2.A.29) family. In terms of assembly, monomer. Found in a complex with ARL2, ARL2BP and SLC25A4/ANT1. Interacts with ARL2BP. Interacts with TIMM44; leading to inhibit the presequence translocase TIMM23, thereby promoting stabilization of PINK1. Under cell death induction, transglutaminated by TGM2. Transglutamination leads to formation of covalent cross-links between a glutamine and the epsilon-amino group of a lysine residue, forming polymers. In terms of tissue distribution, detected in heart muscle (at protein level). Detected in heart.

The protein localises to the mitochondrion inner membrane. The protein resides in the membrane. It carries out the reaction ADP(in) + ATP(out) = ADP(out) + ATP(in). The catalysed reaction is H(+)(in) = H(+)(out). With respect to regulation, the matrix-open state (m-state) is inhibited by the membrane-permeable bongkrekic acid (BKA). The cytoplasmic-open state (c-state) is inhibited by the membrane-impermeable toxic inhibitor carboxyatractyloside (CATR). Proton transporter activity is inhibited by ADP:ATP antiporter activity. Functionally, ADP:ATP antiporter that mediates import of ADP into the mitochondrial matrix for ATP synthesis, and export of ATP out to fuel the cell. Cycles between the cytoplasmic-open state (c-state) and the matrix-open state (m-state): operates by the alternating access mechanism with a single substrate-binding site intermittently exposed to either the cytosolic (c-state) or matrix (m-state) side of the inner mitochondrial membrane. In addition to its ADP:ATP antiporter activity, also involved in mitochondrial uncoupling and mitochondrial permeability transition pore (mPTP) activity. Plays a role in mitochondrial uncoupling by acting as a proton transporter: proton transport uncouples the proton flows via the electron transport chain and ATP synthase to reduce the efficiency of ATP production and cause mitochondrial thermogenesis. Proton transporter activity is inhibited by ADP:ATP antiporter activity, suggesting that SLC25A4/ANT1 acts as a master regulator of mitochondrial energy output by maintaining a delicate balance between ATP production (ADP:ATP antiporter activity) and thermogenesis (proton transporter activity). Proton transporter activity requires free fatty acids as cofactor, but does not transport it. Probably mediates mitochondrial uncoupling in tissues that do not express UCP1. Also plays a key role in mPTP opening, a non-specific pore that enables free passage of the mitochondrial membranes to solutes of up to 1.5 kDa, and which contributes to cell death. It is however unclear if SLC25A4/ANT1 constitutes a pore-forming component of mPTP or regulates it. Acts as a regulator of mitophagy independently of ADP:ATP antiporter activity: promotes mitophagy via interaction with TIMM44, leading to inhibit the presequence translocase TIMM23, thereby promoting stabilization of PINK1. This is ADP/ATP translocase 1 from Bos taurus (Bovine).